Reading from the N-terminus, the 467-residue chain is Interleukin-6 receptor subunit alpha (467 aa).

A signal peptide spans 1–19 (MLAVGCALLTALLAAPGMA). In terms of domain architecture, Ig-like C2-type spans 20–112 (LAPRGCSKLE…AGSVRLLVDA (93 aa)). The Extracellular portion of the chain corresponds to 20-365 (LAPRGCSKLE…VQDSASVPLP (346 aa)). 4 disulfides stabilise this stretch: cysteine 25–cysteine 193, cysteine 47–cysteine 96, cysteine 121–cysteine 132, and cysteine 165–cysteine 176. Asparagine 55 and asparagine 93 each carry an N-linked (GlcNAc...) asparagine glycan. 2 Fibronectin type-III domains span residues 113–217 (PPEE…LQPD) and 218–316 (PPVN…IPWT). N-linked (GlcNAc...) asparagine glycans are attached at residues asparagine 221 and asparagine 245. The short motif at 303–307 (WSEWS) is the WSXWS motif element. The disordered stretch occupies residues 315-357 (WTESRSSPAETELPLSTQAPTTNEDDEDISSKESANATSLPVQ). Composition is skewed to polar residues over residues 317-336 (ESRSSPAETELPLSTQAPTT) and 346-357 (KESANATSLPVQ). Asparagine 350 carries an N-linked (GlcNAc...) asparagine glycan. An O-linked (GlcNAc) threonine glycan is attached at threonine 352. A helical transmembrane segment spans residues 366 to 386 (TFLVAGGSLAFGTLLCIGIIL). At 387–467 (RFKKTGQLQA…VSNRDYFFPR (81 aa)) the chain is on the cytoplasmic side. The tract at residues 428 to 467 (ISPPVSPNSLGDNTSRNSRPEARGPQSPYDVSNRDYFFPR) is disordered.

This sequence belongs to the type I cytokine receptor family. Type 3 subfamily. Component of a hexamer of two molecules each of IL6, IL6R and IL6ST; first binds to IL6 to associate with the signaling subunit IL6ST. Interacts (via N-terminal ectodomain) with SORL1; this interaction may affect IL6-binding to IL6R, hence decrease IL6 'classic-signaling'. As to quaternary structure, also interacts with SORL1; this interaction leads to soluble IL6R internalization. May form a trimeric complex with the soluble SORL1 ectodomain and circulating IL6 receptor; this interaction might stabilize circulating IL6, hence promote IL6 'trans-signaling'. A short soluble form is also released from the membrane by proteolysis. The sIL6R is formed by limited proteolysis of membrane-bound receptors, a process referred to as ectodomain shedding. mIL6R is cleaved by the proteases ADAM10 and ADAM17. In terms of processing, glycosylated. Glycosylation is dispensable for transport, signaling, and cell-surface turnover. Glycosylation at Asn-55 is a protease-regulatory exosite. Glycosylation is required for ADAM17-mediated proteolysis. In terms of tissue distribution, expressed in liver.

It is found in the cell membrane. The protein localises to the secreted. Classic and trans-signaling are both inhibited by tocilizumab, a humanized monoclonal antibody that blocks interleukin IL6R signaling. In terms of biological role, part of the receptor for interleukin 6. Binds to IL6 with low affinity, but does not transduce a signal. Signal activation necessitate an association with IL6ST. Activation leads to the regulation of the immune response, acute-phase reactions and hematopoiesis. The interaction with membrane-bound IL6R and IL6ST stimulates 'classic signaling', the restricted expression of the IL6R limits classic IL6 signaling to only a few tissues such as the liver and some cells of the immune system. Whereas the binding of IL6 and soluble IL6R to IL6ST stimulates 'trans-signaling'. Alternatively, 'cluster signaling' occurs when membrane-bound IL6:IL6R complexes on transmitter cells activate IL6ST receptors on neighboring receiver cells. Functionally, signaling via the membrane-bound IL6R is mostly regenerative and anti-inflammatory. Drives naive CD4(+) T cells to the Th17 lineage, through 'cluster signaling' by dendritic cells. Soluble form of IL6 receptor (sIL6R) that acts as an agonist of IL6 activity. The IL6:sIL6R complex (hyper-IL6) binds to IL6ST/gp130 on cell surfaces and induces signaling also on cells that do not express membrane-bound IL6R in a process called IL6 'trans-signaling'. sIL6R is causative for the pro-inflammatory properties of IL6 and an important player in the development of chronic inflammatory diseases. In complex with IL6, is required for induction of VEGF production. Plays a protective role during liver injury, being required for maintenance of tissue regeneration. 'Trans-signaling' in central nervous system regulates energy and glucose homeostasis. This Sus scrofa (Pig) protein is Interleukin-6 receptor subunit alpha (IL6R).